Reading from the N-terminus, the 364-residue chain is tRNA 2-selenouridine synthase (364 aa).

The Rhodanese domain occupies 14 to 137; the sequence is LIADTPIIDV…LRQTAIQATI (124 aa). The active-site S-selanylcysteine intermediate is cysteine 97.

It belongs to the SelU family. As to quaternary structure, monomer.

It catalyses the reaction 5-methylaminomethyl-2-thiouridine(34) in tRNA + selenophosphate + (2E)-geranyl diphosphate + H2O + H(+) = 5-methylaminomethyl-2-selenouridine(34) in tRNA + (2E)-thiogeraniol + phosphate + diphosphate. It carries out the reaction 5-methylaminomethyl-2-thiouridine(34) in tRNA + (2E)-geranyl diphosphate = 5-methylaminomethyl-S-(2E)-geranyl-thiouridine(34) in tRNA + diphosphate. The catalysed reaction is 5-methylaminomethyl-S-(2E)-geranyl-thiouridine(34) in tRNA + selenophosphate + H(+) = 5-methylaminomethyl-2-(Se-phospho)selenouridine(34) in tRNA + (2E)-thiogeraniol. The enzyme catalyses 5-methylaminomethyl-2-(Se-phospho)selenouridine(34) in tRNA + H2O = 5-methylaminomethyl-2-selenouridine(34) in tRNA + phosphate. Involved in the post-transcriptional modification of the uridine at the wobble position (U34) of tRNA(Lys), tRNA(Glu) and tRNA(Gln). Catalyzes the conversion of 2-thiouridine (S2U-RNA) to 2-selenouridine (Se2U-RNA). Acts in a two-step process involving geranylation of 2-thiouridine (S2U) to S-geranyl-2-thiouridine (geS2U) and subsequent selenation of the latter derivative to 2-selenouridine (Se2U) in the tRNA chain. This chain is tRNA 2-selenouridine synthase, found in Escherichia coli (strain SE11).